Consider the following 303-residue polypeptide: 2-dehydropantoate 2-reductase (303 aa).

NADP(+) contacts are provided by residues 7-12 (GCGALG), asparagine 98, and alanine 122. Asparagine 98 is a binding site for substrate. Residue lysine 176 is the Proton donor of the active site. Positions 180, 184, 194, and 244 each coordinate substrate. NADP(+) is bound at residue glutamate 256.

It belongs to the ketopantoate reductase family. In terms of assembly, monomer.

The protein localises to the cytoplasm. The catalysed reaction is (R)-pantoate + NADP(+) = 2-dehydropantoate + NADPH + H(+). It functions in the pathway cofactor biosynthesis; (R)-pantothenate biosynthesis; (R)-pantoate from 3-methyl-2-oxobutanoate: step 2/2. Functionally, catalyzes the NADPH-dependent reduction of ketopantoate into pantoic acid. The polypeptide is 2-dehydropantoate 2-reductase (panE) (Salmonella typhi).